The primary structure comprises 183 residues: Protein Syd (183 aa).

It belongs to the Syd family.

The protein resides in the cell inner membrane. Interacts with the SecY protein in vivo. May bind preferentially to an uncomplexed state of SecY, thus functioning either as a chelating agent for excess SecY in the cell or as a regulatory factor that negatively controls the translocase function. The polypeptide is Protein Syd (Idiomarina loihiensis (strain ATCC BAA-735 / DSM 15497 / L2-TR)).